A 1779-amino-acid polypeptide reads, in one-letter code: Collagen alpha-1(IV) chain (1779 aa).

An N-terminal signal peptide occupies residues 1–23 (MLPFWKRLLYAAVIAGALVGADA). N72 carries an N-linked (GlcNAc...) asparagine glycan. 4 disordered regions span residues 89 to 643 (GNRG…KPAL), 655 to 1187 (DKGY…LPGL), 1200 to 1285 (TGAP…IGPR), and 1336 to 1530 (GLPG…RGYE). Low complexity predominate over residues 144–163 (QAGVPGVQGPAGNPGAPGIN). Basic and acidic residues-rich tracts occupy residues 196–217 (KGEKGEPAKENGDYAKGEKGEP) and 249–259 (PRGEHGLKGEK). Over residues 360–369 (PGLNGLPGNP) the composition is skewed to low complexity. The segment covering 434–443 (GQKGGAGLPG) has biased composition (gly residues). Positions 531-545 (GRPGTPGAAGAPGQK) are enriched in low complexity. Positions 724–747 (PGFHGRDGAKGDKGSFGRSGEKGE) are enriched in basic and acidic residues. Low complexity-rich tracts occupy residues 913-931 (VGPIGPAGVAGPPGVPGID) and 1015-1036 (PGLMGIKGDQGLAGAPGQQGLD). Positions 1106–1127 (EKGDQGRSGIDGRDGINGEKGE) are enriched in basic and acidic residues. Over residues 1151 to 1170 (APGMDGLPGAAGAPGAVGYP) the composition is skewed to low complexity. Composition is skewed to basic and acidic residues over residues 1224-1245 (IRGDKGSQGERGYTGEKGEQGE), 1496-1505 (ERGEKGERGL), and 1517-1529 (PKGDRGEPGERGY). The 224-residue stretch at 1555 to 1778 (GILITRHSQS…SRCQVCMKNS (224 aa)) folds into the Collagen IV NC1 domain. 6 disulfide bridges follow: C1570–C1659, C1603–C1656, C1615–C1621, C1678–C1774, C1712–C1771, and C1724–C1731.

Belongs to the type IV collagen family. As to quaternary structure, trimers of two alpha 1(IV) and one alpha 2(IV) chain. Type IV collagen forms a mesh-like network linked through intermolecular interactions between 7S domains and between NC1 domains. In terms of processing, prolines at the third position of the tripeptide repeating unit (G-X-Y) are hydroxylated in some or all of the chains. Type IV collagens contain numerous cysteine residues which are involved in inter- and intramolecular disulfide bonding. 12 of these, located in the NC1 domain, are conserved in all known type IV collagens.

Its subcellular location is the secreted. It localises to the extracellular space. The protein localises to the extracellular matrix. It is found in the basement membrane. Collagen type IV is specific for basement membranes. The sequence is that of Collagen alpha-1(IV) chain from Drosophila melanogaster (Fruit fly).